The following is a 302-amino-acid chain: Sulfate adenylyltransferase subunit 2 2 (302 aa).

This sequence belongs to the PAPS reductase family. CysD subfamily. As to quaternary structure, heterodimer composed of CysD, the smaller subunit, and CysN.

It catalyses the reaction sulfate + ATP + H(+) = adenosine 5'-phosphosulfate + diphosphate. It participates in sulfur metabolism; hydrogen sulfide biosynthesis; sulfite from sulfate: step 1/3. With CysN forms the ATP sulfurylase (ATPS) that catalyzes the adenylation of sulfate producing adenosine 5'-phosphosulfate (APS) and diphosphate, the first enzymatic step in sulfur assimilation pathway. APS synthesis involves the formation of a high-energy phosphoric-sulfuric acid anhydride bond driven by GTP hydrolysis by CysN coupled to ATP hydrolysis by CysD. The sequence is that of Sulfate adenylyltransferase subunit 2 2 from Alkalilimnicola ehrlichii (strain ATCC BAA-1101 / DSM 17681 / MLHE-1).